Consider the following 185-residue polypeptide: Protein GrpE (185 aa).

A disordered region spans residues 1–40 (MSEEKKDEILEQETVETKEEIKTEEAEQKTESLEEKVARL).

Belongs to the GrpE family. As to quaternary structure, homodimer.

It is found in the cytoplasm. Functionally, participates actively in the response to hyperosmotic and heat shock by preventing the aggregation of stress-denatured proteins, in association with DnaK and GrpE. It is the nucleotide exchange factor for DnaK and may function as a thermosensor. Unfolded proteins bind initially to DnaJ; upon interaction with the DnaJ-bound protein, DnaK hydrolyzes its bound ATP, resulting in the formation of a stable complex. GrpE releases ADP from DnaK; ATP binding to DnaK triggers the release of the substrate protein, thus completing the reaction cycle. Several rounds of ATP-dependent interactions between DnaJ, DnaK and GrpE are required for fully efficient folding. The sequence is that of Protein GrpE from Aliarcobacter butzleri (strain RM4018) (Arcobacter butzleri).